We begin with the raw amino-acid sequence, 131 residues long: Metalloproteinase inhibitor (131 aa).

The signal sequence occupies residues 1-29 (MVRKRALGLAGSALTLVLGAVGFTAPAQA). 2 disulfide bridges follow: cysteine 33–cysteine 39 and cysteine 93–cysteine 98.

Inhibits microbial metallo-proteinases, such as thermolysin, but not serine, thiol, or carboxyl proteinases. The chain is Metalloproteinase inhibitor (smpI) from Streptomyces nigrescens.